The following is a 120-amino-acid chain: Large ribosomal subunit protein uL18 (120 aa).

This sequence belongs to the universal ribosomal protein uL18 family. As to quaternary structure, part of the 50S ribosomal subunit; part of the 5S rRNA/L5/L18/L25 subcomplex. Contacts the 5S and 23S rRNAs.

This is one of the proteins that bind and probably mediate the attachment of the 5S RNA into the large ribosomal subunit, where it forms part of the central protuberance. The protein is Large ribosomal subunit protein uL18 of Brucella suis biovar 1 (strain 1330).